The sequence spans 294 residues: Putative cuticle collagen 145 (294 aa).

The first 30 residues, 1 to 30 (MEKILVTFSTGAASIAVLAVLFTVPSLYNT), serve as a signal peptide directing secretion. Positions 100 to 112 (TCPPGPPGPPGQP) are enriched in pro residues. Disordered regions lie at residues 100–133 (TCPP…ATFA) and 148–276 (PQGP…LPGN). Triple-helical region regions lie at residues 102–127 (PPGP…KGDD) and 148–277 (PQGP…PGND). 2 stretches are compositionally biased toward low complexity: residues 164–194 (AGPD…NGQP) and 219–265 (APGA…DGQP). The Collagen-like domain occupies 218–276 (GAPGAPGNAGPAGPAGQDGFPGQDGAPGPAGPAGQDGFPGNAGSDGQPGAPGGPGLPGN).

It belongs to the cuticular collagen family. In terms of assembly, collagen polypeptide chains are complexed within the cuticle by disulfide bonds and other types of covalent cross-links.

In terms of biological role, nematode cuticles are composed largely of collagen-like proteins. The cuticle functions both as an exoskeleton and as a barrier to protect the worm from its environment. This chain is Putative cuticle collagen 145 (col-145), found in Caenorhabditis elegans.